Reading from the N-terminus, the 433-residue chain is tRNA(Ile)-lysidine synthase (433 aa).

37–42 is an ATP binding site; sequence SGGKDS.

This sequence belongs to the tRNA(Ile)-lysidine synthase family.

Its subcellular location is the cytoplasm. The enzyme catalyses cytidine(34) in tRNA(Ile2) + L-lysine + ATP = lysidine(34) in tRNA(Ile2) + AMP + diphosphate + H(+). Ligates lysine onto the cytidine present at position 34 of the AUA codon-specific tRNA(Ile) that contains the anticodon CAU, in an ATP-dependent manner. Cytidine is converted to lysidine, thus changing the amino acid specificity of the tRNA from methionine to isoleucine. In Leptospira interrogans serogroup Icterohaemorrhagiae serovar Lai (strain 56601), this protein is tRNA(Ile)-lysidine synthase.